We begin with the raw amino-acid sequence, 265 residues long: Mlc titration factor A (265 aa).

The Zn(2+) site is built by H111, H148, H152, and E211.

This sequence belongs to the MtfA family. In terms of assembly, interacts with Mlc. The cofactor is Zn(2+).

The protein resides in the cytoplasm. Its function is as follows. Involved in the modulation of the activity of the glucose-phosphotransferase system (glucose-PTS). Interacts with the transcriptional repressor Mlc, preventing its interaction with DNA and leading to the modulation of expression of genes regulated by Mlc, including ptsG, which encodes the PTS system glucose-specific EIICB component. In terms of biological role, shows zinc-dependent metallopeptidase activity. This chain is Mlc titration factor A, found in Escherichia coli O7:K1 (strain IAI39 / ExPEC).